The sequence spans 360 residues: Sensor histidine kinase LiaS (360 aa).

Over 1 to 15 (MRKKMLASLQWRAIR) the chain is Cytoplasmic. A helical transmembrane segment spans residues 16–36 (MTTGISLLLFVCLISFMMFYY). The Extracellular segment spans residues 37–47 (RLDPLVLLSSS). The helical transmembrane segment at 48-68 (WFGIPFILILLLISVTVGFAS) threads the bilayer. Over 69–360 (GYMYGNRLKT…ENERDSSIID (292 aa)) the chain is Cytoplasmic. The 53-residue stretch at 74-126 (NRLKTRIDTLIESILTFENGNFAYRIPPLGDDEIGLAADQLNEMAKRVELQVA) folds into the HAMP domain. A Histidine kinase domain is found at 153–346 (RLARDLHDAV…QIEVKVPIFP (194 aa)). Residue His159 is modified to Phosphohistidine; by autocatalysis.

Its subcellular location is the cell membrane. It catalyses the reaction ATP + protein L-histidine = ADP + protein N-phospho-L-histidine.. In terms of biological role, member of the two-component regulatory system LiaS/LiaR probably involved in response to a subset of cell wall-active antibiotics that interfere with the lipid II cycle in the cytoplasmic membrane (bacitracin, nisin, ramoplanin and vancomycin). Also seems to be involved in response to cationic antimicrobial peptides and secretion stress. Activates probably LiaR by phosphorylation. This chain is Sensor histidine kinase LiaS (liaS), found in Bacillus subtilis (strain 168).